The chain runs to 286 residues: Transcriptional regulator of yeast form adherence 4 (286 aa).

Composition is skewed to low complexity over residues 1–29 (MSLP…PPSS) and 37–65 (LSTS…TTTN). Residues 1–71 (MSLPMSPVSP…TTTNYGTKTP (71 aa)) are disordered. 2 consecutive C2H2-type zinc fingers follow at residues 78-101 (FNCT…LSTH) and 107-130 (FTCG…KNLH). The segment at 146–260 (HCNKDNDSKS…ITNSSTSHIH (115 aa)) is disordered. 2 stretches are compositionally biased toward low complexity: residues 156-165 (GSDSNTNKTN) and 228-244 (SVPS…PTST). The span at 245–260 (NNDTASITNSSTSHIH) shows a compositional bias: polar residues.

It is found in the nucleus. In terms of biological role, transcription factor required for yeast cell adherence to silicone substrate. This Candida albicans (strain SC5314 / ATCC MYA-2876) (Yeast) protein is Transcriptional regulator of yeast form adherence 4 (TRY4).